The following is a 369-amino-acid chain: Glutamate 5-kinase (369 aa).

K9 contributes to the ATP binding site. Substrate is bound by residues S49, D136, and N148. ATP-binding positions include 168 to 169 (TD) and 210 to 216 (TGGMLTK). One can recognise a PUA domain in the interval 275 to 355 (RGSVYVDEGA…KGVFIHRDDW (81 aa)).

It belongs to the glutamate 5-kinase family.

It localises to the cytoplasm. The enzyme catalyses L-glutamate + ATP = L-glutamyl 5-phosphate + ADP. Its pathway is amino-acid biosynthesis; L-proline biosynthesis; L-glutamate 5-semialdehyde from L-glutamate: step 1/2. Its function is as follows. Catalyzes the transfer of a phosphate group to glutamate to form L-glutamate 5-phosphate. The protein is Glutamate 5-kinase of Neisseria meningitidis serogroup B (strain ATCC BAA-335 / MC58).